A 298-amino-acid polypeptide reads, in one-letter code: ATP phosphoribosyltransferase (298 aa).

Belongs to the ATP phosphoribosyltransferase family. Long subfamily. The cofactor is Mg(2+).

The protein resides in the cytoplasm. The catalysed reaction is 1-(5-phospho-beta-D-ribosyl)-ATP + diphosphate = 5-phospho-alpha-D-ribose 1-diphosphate + ATP. It functions in the pathway amino-acid biosynthesis; L-histidine biosynthesis; L-histidine from 5-phospho-alpha-D-ribose 1-diphosphate: step 1/9. With respect to regulation, feedback inhibited by histidine. Its function is as follows. Catalyzes the condensation of ATP and 5-phosphoribose 1-diphosphate to form N'-(5'-phosphoribosyl)-ATP (PR-ATP). Has a crucial role in the pathway because the rate of histidine biosynthesis seems to be controlled primarily by regulation of HisG enzymatic activity. The polypeptide is ATP phosphoribosyltransferase (Vibrio parahaemolyticus serotype O3:K6 (strain RIMD 2210633)).